A 236-amino-acid chain; its full sequence is SERTA domain-containing protein 1 (236 aa).

The 48-residue stretch at 38-85 (PTVASSSLFDLSVVKLHHSLRQSEPDLRHLVLVVNTLRRIQASMEPAP) folds into the SERTA domain. Residues 190–211 (ASEGLKPGPENGPAKEEPPELD) are disordered.

As to quaternary structure, interacts with the PHD-bromodomain of TIF1, TRIM28/TIF1B and p300/CBP. Interacts with E2F1 and TFDP1; modulates transactivation activity of TFDP1/E2F complexes. Also interacts with CDK4. Post-translationally, polyubiquitinated, which promotes proteasomal degradation. In terms of tissue distribution, detected at in testis, lung and, at lower levels, in muscle, liver, spleen, brain and heart.

In terms of biological role, acts at E2F-responsive promoters as coregulator to integrate signals provided by PHD- and/or bromodomain-containing transcription factors. Stimulates E2F1/TFDP1 transcriptional activity. Renders the activity of cyclin D1/CDK4 resistant to the inhibitory effects of CDKN2A/p16INK4A. The polypeptide is SERTA domain-containing protein 1 (Sertad1) (Mus musculus (Mouse)).